A 199-amino-acid chain; its full sequence is Riboflavin synthase (199 aa).

2 Lumazine-binding repeats span residues 1 to 95 (MFSG…IGGH) and 96 to 188 (FVSG…VDTI). 2,4-dihydroxypteridine contacts are provided by residues 4–6 (GII), 46–48 (CLT), 60–65 (DVTEET), 99–101 (GHV), Lys130, 139–141 (SLT), and 153–158 (SLIPET).

As to quaternary structure, homotrimer.

The catalysed reaction is 2 6,7-dimethyl-8-(1-D-ribityl)lumazine + H(+) = 5-amino-6-(D-ribitylamino)uracil + riboflavin. It participates in cofactor biosynthesis; riboflavin biosynthesis; riboflavin from 2-hydroxy-3-oxobutyl phosphate and 5-amino-6-(D-ribitylamino)uracil: step 2/2. Functionally, catalyzes the dismutation of two molecules of 6,7-dimethyl-8-ribityllumazine, resulting in the formation of riboflavin and 5-amino-6-(D-ribitylamino)uracil. This chain is Riboflavin synthase (ribE), found in Chlamydia trachomatis serovar D (strain ATCC VR-885 / DSM 19411 / UW-3/Cx).